Consider the following 430-residue polypeptide: Small ribosomal subunit protein uS5m (430 aa).

The S5 DRBM domain occupies 218-282 (FDTRILEVRN…NRAVHHLHYI (65 aa)).

This sequence belongs to the universal ribosomal protein uS5 family. In terms of assembly, component of the mitochondrial small ribosomal subunit (mt-SSU). Mature mammalian 55S mitochondrial ribosomes consist of a small (28S) and a large (39S) subunit. The 28S small subunit contains a 12S ribosomal RNA (12S mt-rRNA) and 30 different proteins. The 39S large subunit contains a 16S rRNA (16S mt-rRNA), a copy of mitochondrial valine transfer RNA (mt-tRNA(Val)), which plays an integral structural role, and 52 different proteins.

The protein resides in the mitochondrion. The protein is Small ribosomal subunit protein uS5m (MRPS5) of Homo sapiens (Human).